A 445-amino-acid chain; its full sequence is Exodeoxyribonuclease 7 large subunit (445 aa).

This sequence belongs to the XseA family. In terms of assembly, heterooligomer composed of large and small subunits.

Its subcellular location is the cytoplasm. The catalysed reaction is Exonucleolytic cleavage in either 5'- to 3'- or 3'- to 5'-direction to yield nucleoside 5'-phosphates.. Its function is as follows. Bidirectionally degrades single-stranded DNA into large acid-insoluble oligonucleotides, which are then degraded further into small acid-soluble oligonucleotides. In Xanthomonas axonopodis pv. citri (strain 306), this protein is Exodeoxyribonuclease 7 large subunit.